A 304-amino-acid polypeptide reads, in one-letter code: Acetylglutamate kinase (304 aa).

Substrate contacts are provided by residues 75 to 76 (GG), Arg-97, and Asn-196.

It belongs to the acetylglutamate kinase family. ArgB subfamily.

The protein resides in the cytoplasm. The catalysed reaction is N-acetyl-L-glutamate + ATP = N-acetyl-L-glutamyl 5-phosphate + ADP. It functions in the pathway amino-acid biosynthesis; L-arginine biosynthesis; N(2)-acetyl-L-ornithine from L-glutamate: step 2/4. Catalyzes the ATP-dependent phosphorylation of N-acetyl-L-glutamate. The polypeptide is Acetylglutamate kinase (Corynebacterium urealyticum (strain ATCC 43042 / DSM 7109)).